A 324-amino-acid polypeptide reads, in one-letter code: Methionyl-tRNA formyltransferase (324 aa).

Residue 114 to 117 (SLLP) participates in (6S)-5,6,7,8-tetrahydrofolate binding.

The protein belongs to the Fmt family.

It catalyses the reaction L-methionyl-tRNA(fMet) + (6R)-10-formyltetrahydrofolate = N-formyl-L-methionyl-tRNA(fMet) + (6S)-5,6,7,8-tetrahydrofolate + H(+). Its function is as follows. Attaches a formyl group to the free amino group of methionyl-tRNA(fMet). The formyl group appears to play a dual role in the initiator identity of N-formylmethionyl-tRNA by promoting its recognition by IF2 and preventing the misappropriation of this tRNA by the elongation apparatus. This Parabacteroides distasonis (strain ATCC 8503 / DSM 20701 / CIP 104284 / JCM 5825 / NCTC 11152) protein is Methionyl-tRNA formyltransferase.